The sequence spans 371 residues: Deoxyuridine 5'-triphosphate nucleotidohydrolase (371 aa).

Substrate is bound by residues 260-262 (RSS) and 366-367 (FG). The tract at residues 350-371 (NEFDAEAPPSERGTGGFGSTGI) is disordered. Gly residues predominate over residues 362 to 371 (GTGGFGSTGI).

The protein belongs to the dUTPase family. Mg(2+) serves as cofactor.

It carries out the reaction dUTP + H2O = dUMP + diphosphate + H(+). Functionally, involved in nucleotide metabolism: produces dUMP, the immediate precursor of thymidine nucleotides and decreases the intracellular concentration of dUTP to avoid uracil incorporation into viral DNA. This Homo sapiens (Human) protein is Deoxyuridine 5'-triphosphate nucleotidohydrolase.